The following is a 126-amino-acid chain: Ribosome-binding factor A (126 aa).

This sequence belongs to the RbfA family. Monomer. Binds 30S ribosomal subunits, but not 50S ribosomal subunits or 70S ribosomes.

The protein resides in the cytoplasm. Its function is as follows. One of several proteins that assist in the late maturation steps of the functional core of the 30S ribosomal subunit. Associates with free 30S ribosomal subunits (but not with 30S subunits that are part of 70S ribosomes or polysomes). Required for efficient processing of 16S rRNA. May interact with the 5'-terminal helix region of 16S rRNA. This is Ribosome-binding factor A from Haemophilus ducreyi (strain 35000HP / ATCC 700724).